Consider the following 174-residue polypeptide: Keratin-associated protein 1-5 (174 aa).

Residues 3–172 form a 15 X 5 AA repeats of C-C-[QEPVRC]-[TPIVLE]-[SRHVP] region; the sequence is CCQTSFCGYP…CCRPVCCCEP (170 aa).

The protein belongs to the KRTAP type 1 family. Interacts with hair keratins. As to expression, expressed in the middle/upper portions of the hair cortex, in the region termed the keratogenous zone.

In the hair cortex, hair keratin intermediate filaments are embedded in an interfilamentous matrix, consisting of hair keratin-associated proteins (KRTAP), which are essential for the formation of a rigid and resistant hair shaft through their extensive disulfide bond cross-linking with abundant cysteine residues of hair keratins. The matrix proteins include the high-sulfur and high-glycine-tyrosine keratins. This is Keratin-associated protein 1-5 (KRTAP1-5) from Homo sapiens (Human).